The chain runs to 208 residues: Ras-related protein Rab-6A (208 aa).

Serine 2 carries the N-acetylserine modification. GTP-binding residues include serine 23, valine 24, glycine 25, lysine 26, threonine 27, serine 28, aspartate 39, asparagine 40, tyrosine 42, and threonine 45. Position 27 (threonine 27) interacts with Mg(2+). Positions 32–50 match the Switch 1 motif; that stretch reads RFMYDSFDNTYQATIGIDF. Residues threonine 45 and aspartate 68 each coordinate Mg(2+). Residues 69–88 carry the Switch 2 motif; the sequence is TAGQERFRSLIPSYIRDSAA. GTP contacts are provided by glycine 71, asparagine 126, lysine 127, aspartate 129, serine 156, alanine 157, and lysine 158. S-geranylgeranyl cysteine attachment occurs at residues cysteine 206 and cysteine 208. Cysteine 208 bears the Cysteine methyl ester mark.

Belongs to the small GTPase superfamily. Rab family. Mg(2+) is required as a cofactor.

It is found in the golgi apparatus membrane. The catalysed reaction is GTP + H2O = GDP + phosphate + H(+). Regulated by guanine nucleotide exchange factors (GEFs) which promote the exchange of bound GDP for free GTP. Regulated by GTPase activating proteins (GAPs) which increase the GTP hydrolysis activity. Inhibited by GDP dissociation inhibitors (GDIs). The small GTPases Rab are key regulators of intracellular membrane trafficking, from the formation of transport vesicles to their fusion with membranes. Rabs cycle between an inactive GDP-bound form and an active GTP-bound form that is able to recruit to membranes different sets of downstream effectors directly responsible for vesicle formation, movement, tethering and fusion. RAB6A acts as a regulator of COPI-independent retrograde transport from the Golgi apparatus towards the endoplasmic reticulum (ER). The chain is Ras-related protein Rab-6A (RAB6A) from Gallus gallus (Chicken).